A 206-amino-acid chain; its full sequence is Dephospho-CoA kinase (206 aa).

The 201-residue stretch at 6-206 (IIGLTGGIAS…KWKWKDWSKK (201 aa)) folds into the DPCK domain. 14–19 (ASGKST) is a binding site for ATP.

The protein belongs to the CoaE family.

The protein localises to the cytoplasm. It carries out the reaction 3'-dephospho-CoA + ATP = ADP + CoA + H(+). The protein operates within cofactor biosynthesis; coenzyme A biosynthesis; CoA from (R)-pantothenate: step 5/5. Its function is as follows. Catalyzes the phosphorylation of the 3'-hydroxyl group of dephosphocoenzyme A to form coenzyme A. In Carboxydothermus hydrogenoformans (strain ATCC BAA-161 / DSM 6008 / Z-2901), this protein is Dephospho-CoA kinase.